The following is a 107-amino-acid chain: Nucleoid-associated protein GbCGDNIH1_0260 (107 aa).

It belongs to the YbaB/EbfC family. In terms of assembly, homodimer.

The protein resides in the cytoplasm. It localises to the nucleoid. Binds to DNA and alters its conformation. May be involved in regulation of gene expression, nucleoid organization and DNA protection. The chain is Nucleoid-associated protein GbCGDNIH1_0260 from Granulibacter bethesdensis (strain ATCC BAA-1260 / CGDNIH1).